The primary structure comprises 745 residues: Probable copper-transporting ATPase PacS (745 aa).

Residues 1-94 (MAQTINLQLE…PVFSAKLVTG (94 aa)) are Cytoplasmic-facing. An HMA domain is found at 3-68 (QTINLQLEGM…AVERAGYHAR (66 aa)). A metal cation-binding residues include C14 and C17. Residues 95–115 (LVISAVLFFGSLPMMLGVNIP) form a helical membrane-spanning segment. Topologically, residues 116-125 (HFPHIFHDPW) are extracellular. Residues 126 to 145 (LQWLLATPVQFWSGAEFYRG) form a helical membrane-spanning segment. The Cytoplasmic segment spans residues 146 to 152 (AWKSVRT). The helical transmembrane segment at 153–173 (RSATMDTLVALGTSAAYFYSV) threads the bilayer. Topologically, residues 174–193 (AITLFPQWLTSQGLAAHVYF) are extracellular. A helical transmembrane segment spans residues 194–214 (EAAAVVITLILLGRSLEQRAR). The Cytoplasmic portion of the chain corresponds to 215 to 342 (RETSAAIRKL…KAPIQHFVDR (128 aa)). Residues 343–365 (ITHWFVPTVIVVAIAAFCIWWLT) traverse the membrane as a helical segment. Topologically, residues 366-372 (TGNITLA) are extracellular. The chain crosses the membrane as a helical span at residues 373 to 390 (VLTLVEVLIIACPCALGL). Topologically, residues 391–543 (ATPTSVMVGT…QAQQWEKEQK (153 aa)) are cytoplasmic. The 4-aspartylphosphate intermediate role is filled by D428. Residues 544 to 564 (TVIWLAVDTEVKALLAIADAI) traverse the membrane as a helical segment. Over 565–687 (KPSSPQVVQA…KLSRATMGNI (123 aa)) the chain is Extracellular. Mg(2+) is bound by residues D633 and D637. Residues 688-707 (RQNLFFAFIYNVIGIPVAAG) traverse the membrane as a helical segment. Residues 708–719 (LFYPLFGLLLNP) are Cytoplasmic-facing. A helical transmembrane segment spans residues 720-738 (ILAGAAMAFSSVSVVTNAL). Over 739 to 745 (RLKKFCP) the chain is Extracellular.

This sequence belongs to the cation transport ATPase (P-type) (TC 3.A.3) family. Type IB subfamily.

It is found in the cell membrane. It carries out the reaction Cu(+)(in) + ATP + H2O = Cu(+)(out) + ADP + phosphate + H(+). Functionally, may play a role in the osmotic adaptation. In Synechocystis sp. (strain ATCC 27184 / PCC 6803 / Kazusa), this protein is Probable copper-transporting ATPase PacS (pacS).